Here is a 614-residue protein sequence, read N- to C-terminus: Fimbrin (614 aa).

EF-hand domains lie at 16 to 50 (EEIL…DSKK) and 51 to 86 (GSYD…LKKG). The Ca(2+) site is built by Asp29, Asp31, Tyr35, Thr40, Asp66, Ser68, Arg70, and Asp75. Actin-binding stretches follow at residues 98–368 (TIKG…GLEP) and 369–614 (LNEE…LMAV). Calponin-homology (CH) domains are found at residues 112 to 233 (EEER…RRGL), 261 to 364 (LPPE…NTHP), 385 to 495 (EREA…RMNI), and 508 to 614 (TLSD…LMAV).

It localises to the cytoplasm. It is found in the cytoskeleton. The protein resides in the actin patch. Binds to actin, and functionally associates with actin structures involved in the development and maintenance of cell polarity. Plays a role in cytokinesis. Plays important roles in mating and in spore formation. This is Fimbrin (fim1) from Schizosaccharomyces pombe (strain 972 / ATCC 24843) (Fission yeast).